The primary structure comprises 327 residues: Olfactory receptor 6A2 (327 aa).

Over 1-26 the chain is Extracellular; it reads MEWRNHSGRVSEFVLLGFPAPAPLQV. Residue Asn5 is glycosylated (N-linked (GlcNAc...) asparagine). A helical transmembrane segment spans residues 27–47; that stretch reads LLFALLLLAYVLVLTENTLII. At 48-55 the chain is on the cytoplasmic side; sequence MAIRNHST. A helical membrane pass occupies residues 56 to 76; it reads LHKPMYFFLANMSFLEIWYVT. At 77-104 the chain is on the extracellular side; sequence VTIPKMLAGFVGSKQDHGQLISFEGCMT. Cys102 and Cys194 are joined by a disulfide. The helical transmembrane segment at 105 to 125 threads the bilayer; sequence QLYFFLGLGCTECVLLAVMAY. The Cytoplasmic segment spans residues 126 to 144; the sequence is DRYMAICYPLHYPVIVSGR. The chain crosses the membrane as a helical span at residues 145–165; the sequence is LCVQMAAGSWAGGFGISMVKV. The Extracellular segment spans residues 166 to 201; it reads FLISGLSYCGPNIINHFFCDVSPLLNLSCTDMSTAE. N-linked (GlcNAc...) asparagine glycosylation is present at Asn191. The chain crosses the membrane as a helical span at residues 202-222; the sequence is LTDFILAIFILLGPLSVTGAS. Over 223 to 242 the chain is Cytoplasmic; the sequence is YVAITGAVMHIPSAAGRYKA. The helical transmembrane segment at 243–263 threads the bilayer; it reads FSTCASHLTVVIIFYAASIFI. The Extracellular portion of the chain corresponds to 264-276; sequence YARPKALSAFDTN. The helical transmembrane segment at 277-297 threads the bilayer; the sequence is KLVSVLYAVIVPLLNPIIYCL. The Cytoplasmic segment spans residues 298–327; the sequence is RNQEVKRALCCTLHLYQHQDPDPKKASRNV.

It belongs to the G-protein coupled receptor 1 family.

The protein localises to the cell membrane. Its function is as follows. Odorant receptor. The chain is Olfactory receptor 6A2 (OR6A2) from Homo sapiens (Human).